We begin with the raw amino-acid sequence, 276 residues long: Large ribosomal subunit protein uL2 (276 aa).

Residues 218 to 276 form a disordered region; sequence PYVRGSAMNPVDHPHGGGEGRAPIGRPAPSTPWGKPALGLKTRKKNKKSNKYIVRRRKK. Over residues 258–276 the composition is skewed to basic residues; that stretch reads KTRKKNKKSNKYIVRRRKK.

Belongs to the universal ribosomal protein uL2 family. As to quaternary structure, part of the 50S ribosomal subunit. Forms a bridge to the 30S subunit in the 70S ribosome.

Its function is as follows. One of the primary rRNA binding proteins. Required for association of the 30S and 50S subunits to form the 70S ribosome, for tRNA binding and peptide bond formation. It has been suggested to have peptidyltransferase activity; this is somewhat controversial. Makes several contacts with the 16S rRNA in the 70S ribosome. The protein is Large ribosomal subunit protein uL2 of Finegoldia magna (strain ATCC 29328 / DSM 20472 / WAL 2508) (Peptostreptococcus magnus).